The following is a 455-amino-acid chain: Bifunctional protein GlmU (455 aa).

Residues 1 to 227 form a pyrophosphorylase region; the sequence is MGLSVIILAA…CEEVQGVNDR (227 aa). Residues 8 to 11, K22, Q73, 78 to 79, 100 to 102, G137, E152, N167, and N225 each bind UDP-N-acetyl-alpha-D-glucosamine; these read LAAG, GT, and YGD. A Mg(2+)-binding site is contributed by D102. Position 225 (N225) interacts with Mg(2+). The tract at residues 228 to 248 is linker; sequence WELTKLERYYQRLMAKKLSLA. Residues 249–455 are N-acetyltransferase; that stretch reads GVTIIDPERF…KGWHRPTKKE (207 aa). 2 residues coordinate UDP-N-acetyl-alpha-D-glucosamine: R332 and K350. The Proton acceptor role is filled by H362. The UDP-N-acetyl-alpha-D-glucosamine site is built by Y365 and N376. Acetyl-CoA contacts are provided by residues A379, 385–386, S404, A422, and R439; that span reads NY.

In the N-terminal section; belongs to the N-acetylglucosamine-1-phosphate uridyltransferase family. It in the C-terminal section; belongs to the transferase hexapeptide repeat family. As to quaternary structure, homotrimer. Mg(2+) serves as cofactor.

It is found in the cytoplasm. The catalysed reaction is alpha-D-glucosamine 1-phosphate + acetyl-CoA = N-acetyl-alpha-D-glucosamine 1-phosphate + CoA + H(+). It catalyses the reaction N-acetyl-alpha-D-glucosamine 1-phosphate + UTP + H(+) = UDP-N-acetyl-alpha-D-glucosamine + diphosphate. It functions in the pathway nucleotide-sugar biosynthesis; UDP-N-acetyl-alpha-D-glucosamine biosynthesis; N-acetyl-alpha-D-glucosamine 1-phosphate from alpha-D-glucosamine 6-phosphate (route II): step 2/2. The protein operates within nucleotide-sugar biosynthesis; UDP-N-acetyl-alpha-D-glucosamine biosynthesis; UDP-N-acetyl-alpha-D-glucosamine from N-acetyl-alpha-D-glucosamine 1-phosphate: step 1/1. It participates in bacterial outer membrane biogenesis; LPS lipid A biosynthesis. Its function is as follows. Catalyzes the last two sequential reactions in the de novo biosynthetic pathway for UDP-N-acetylglucosamine (UDP-GlcNAc). The C-terminal domain catalyzes the transfer of acetyl group from acetyl coenzyme A to glucosamine-1-phosphate (GlcN-1-P) to produce N-acetylglucosamine-1-phosphate (GlcNAc-1-P), which is converted into UDP-GlcNAc by the transfer of uridine 5-monophosphate (from uridine 5-triphosphate), a reaction catalyzed by the N-terminal domain. This chain is Bifunctional protein GlmU, found in Coxiella burnetii (strain Dugway 5J108-111).